Reading from the N-terminus, the 149-residue chain is Transcriptional repressor NrdR (149 aa).

A zinc finger lies at 3–34 (CPFCGHLETQVVETRISEDAEFIRRRRQCGAC). Positions 49–139 (PSIVKKDGRR…VYRSFEDIDE (91 aa)) constitute an ATP-cone domain.

It belongs to the NrdR family. Zn(2+) is required as a cofactor.

Functionally, negatively regulates transcription of bacterial ribonucleotide reductase nrd genes and operons by binding to NrdR-boxes. In Polaromonas naphthalenivorans (strain CJ2), this protein is Transcriptional repressor NrdR.